A 762-amino-acid polypeptide reads, in one-letter code: Centrosomal protein of 85 kDa (762 aa).

2 disordered regions span residues 1-26 (MAMQ…IQKG) and 94-119 (VMPS…SKLP). Polar residues-rich tracts occupy residues 14–26 (HVTS…IQKG) and 98–111 (TLGT…STPV). At S17 the chain carries Phosphoserine. S126 and S141 each carry phosphoserine. Residues 257-433 (GLSKPLPSQV…QLIRESLKVA (177 aa)) form a mediates interaction with NEK2 and is required for its function in the suppression of centrosome disjunction region. Coiled coils occupy residues 334-657 (EHLL…RQAQ) and 723-750 (PDVI…MSDR). The tract at residues 434–476 (LQKHSEEVKKQEERVKGRDKHINNLKKKCQKESEQNREKQQRI) is required for centrosome localization and for its function in the suppression of centrosome disjunction. 2 stretches are compositionally biased toward basic and acidic residues: residues 443–455 (KQEE…DKHI) and 463–474 (QKESEQNREKQQ). Disordered stretches follow at residues 443–474 (KQEE…EKQQ) and 541–570 (EAEF…VEME). A Phosphoserine modification is found at S623.

This sequence belongs to the CEP85 family. In terms of assembly, homodimer. Interacts with STIL (via N-terminus); this interaction is essential for robust PLK4 activation and efficient centriole assembly and for PLK4-dependent cell migration. Interacts with PLK4; required for CEP85 to be able to drive centriole duplication and cell migration.

The protein resides in the cytoplasm. It is found in the cytoskeleton. The protein localises to the microtubule organizing center. Its subcellular location is the centrosome. It localises to the spindle pole. The protein resides in the nucleus. It is found in the nucleolus. The protein localises to the centriole. Its subcellular location is the cell cortex. Its function is as follows. Acts as a regulator of centriole duplication through a direct interaction with STIL, a key factor involved in the early steps of centriole formation. The CEP85-STIL protein complex acts as a modulator of PLK4-driven cytoskeletal rearrangements and directional cell motility. Acts as a negative regulator of NEK2 to maintain the centrosome integrity in interphase. Suppresses centrosome disjunction by inhibiting NEK2 kinase activity. This chain is Centrosomal protein of 85 kDa, found in Homo sapiens (Human).